The chain runs to 397 residues: Cathepsin E-A (397 aa).

The N-terminal stretch at 1–16 (MRQILVLLLFATLVYG) is a signal peptide. The propeptide at 17–52 (LIRVPLKRQKSIRKTLKEKGKLSHIWTQQGIDMVQY) is activation peptide. One can recognise a Peptidase A1 domain in the interval 74–385 (YFGEISVGTP…DRGNNRVGLA (312 aa)). The N-linked (GlcNAc...) asparagine glycan is linked to asparagine 86. Aspartate 92 is a catalytic residue. Cysteines 105 and 110 form a disulfide. The N-linked (GlcNAc...) asparagine glycan is linked to asparagine 130. Cysteines 268 and 272 form a disulfide. The active site involves aspartate 277. Cysteines 310 and 344 form a disulfide.

Belongs to the peptidase A1 family. In terms of assembly, homodimer; disulfide-linked. Glycosylated. Contains high mannose-type oligosaccharide. In terms of tissue distribution, expressed predominantly in the larval foregut and the anterior and posterior adult stomach.

Its subcellular location is the endosome. The enzyme catalyses Similar to cathepsin D, but slightly broader specificity.. In terms of biological role, may have a role in immune function. Probably involved in the processing of antigenic peptides during MHC class II-mediated antigen presentation. The chain is Cathepsin E-A (ctse-a) from Xenopus laevis (African clawed frog).